Reading from the N-terminus, the 270-residue chain is tRNA pseudouridine synthase A (270 aa).

The active-site Nucleophile is aspartate 60. An RNA binding region spans residues 107–111 (FHARF). Tyrosine 118 is a binding site for substrate. The interval 168 to 172 (QCQSR) is interaction with tRNA.

This sequence belongs to the tRNA pseudouridine synthase TruA family. In terms of assembly, homodimer.

The enzyme catalyses uridine(38/39/40) in tRNA = pseudouridine(38/39/40) in tRNA. Functionally, formation of pseudouridine at positions 38, 39 and 40 in the anticodon stem and loop of transfer RNAs. The sequence is that of tRNA pseudouridine synthase A from Citrobacter koseri (strain ATCC BAA-895 / CDC 4225-83 / SGSC4696).